We begin with the raw amino-acid sequence, 429 residues long: Trigger factor (429 aa).

The region spanning 161-246 (GDRLSIDFKG…INEIASPKEL (86 aa)) is the PPIase FKBP-type domain.

This sequence belongs to the FKBP-type PPIase family. Tig subfamily.

The protein localises to the cytoplasm. The catalysed reaction is [protein]-peptidylproline (omega=180) = [protein]-peptidylproline (omega=0). Its function is as follows. Involved in protein export. Acts as a chaperone by maintaining the newly synthesized protein in an open conformation. Functions as a peptidyl-prolyl cis-trans isomerase. This is Trigger factor from Vesicomyosocius okutanii subsp. Calyptogena okutanii (strain HA).